A 198-amino-acid polypeptide reads, in one-letter code: Leucine-rich melanocyte differentiation-associated protein (198 aa).

LRR repeat units follow at residues 2 to 22, 26 to 47, 48 to 69, and 75 to 95; these read EKYLSLSGNHSSNKRSLEGLS, SLEELILDNNQLGDDLVLPGLP, RLHTLTLNKNRITDLENLLDHL, and ALEYLSLLGNVACPNELVSLE. The region spanning 96–134 is the LRRCT domain; sequence KDEEDYKRYRCFVLYKLPNLKFLDAQKVTRQEREEALVR.

In the embryo, expressed in melanoblasts. In the fetus, expressed in melanocytes. Not detected in retinal pigment epithelial cells.

In terms of biological role, required for melanocyte differentiation. This Homo sapiens (Human) protein is Leucine-rich melanocyte differentiation-associated protein.